The primary structure comprises 193 residues: METRCLYLLLVCVLSVNHATADNGSIKKMKMQYTGFPLLKFQICVSUGYRRVFEEYTRVLTQRYPDIRIEGENFLPQPLYRHIASFLSVFKLVVIGLIILGKNPFTYLHIETPGIWLWAQENKIYACTMVFFLSNMIENQCMSTGAFEVTLNDVPVWSKLQSGHLPSMQQLVQILENEMKLSVHMDSLPHRRA.

A signal peptide spans 1–21; that stretch reads METRCLYLLLVCVLSVNHATA. Residues 44-47 constitute a cross-link (cysteinyl-selenocysteine (Cys-Sec)); that stretch reads CVSU. Residue U47 is a non-standard amino acid, selenocysteine.

Belongs to the SelWTH family. Selenoprotein T subfamily. In terms of processing, may contain a selenide-sulfide bond between Cys-44 and Sec-47. This bond is speculated to serve as redox-active pair. As to expression, widely expressed in the embryo. High level in embryonic blood at 24 hours post-fertilization (hpf).

It is found in the endoplasmic reticulum membrane. It catalyses the reaction [thioredoxin]-dithiol + NADP(+) = [thioredoxin]-disulfide + NADPH + H(+). Selenoprotein with thioredoxin reductase-like oxidoreductase activity. This is Thioredoxin reductase-like selenoprotein T1b from Danio rerio (Zebrafish).